Here is a 228-residue protein sequence, read N- to C-terminus: Histone H1-III (228 aa).

Residues 1–18 (MSDPAPEVASAVPVASPA) are compositionally biased toward low complexity. 2 disordered regions span residues 1–44 (MSDP…PPVS) and 98–228 (LQTK…AKKA). In terms of domain architecture, H15 spans 39 to 113 (THPPVSEMVV…GASGSFKLPA (75 aa)). The span at 115–133 (AKKEKVAKTPKKAAGEKKP) shows a compositional bias: basic and acidic residues. 2 stretches are compositionally biased toward basic residues: residues 148-170 (SIAK…KSTK) and 178-209 (AAKK…KVAA). Residues 211 to 221 (KPAEKKPEAAK) show a composition bias toward basic and acidic residues.

It belongs to the histone H1/H5 family.

Its subcellular location is the nucleus. The protein localises to the chromosome. Its function is as follows. Histones H1 are necessary for the condensation of nucleosome chains into higher-order structures. This is Histone H1-III from Glyptotendipes barbipes (Midge).